We begin with the raw amino-acid sequence, 890 residues long: Leucine--tRNA ligase (890 aa).

Residues 48-58 carry the 'HIGH' region motif; sequence PYPSGKLHMGH. Positions 645–649 match the 'KMSKS' region motif; the sequence is KMSKS. Lys-648 contributes to the ATP binding site.

Belongs to the class-I aminoacyl-tRNA synthetase family.

It localises to the cytoplasm. It carries out the reaction tRNA(Leu) + L-leucine + ATP = L-leucyl-tRNA(Leu) + AMP + diphosphate. This Polynucleobacter necessarius subsp. necessarius (strain STIR1) protein is Leucine--tRNA ligase.